A 555-amino-acid polypeptide reads, in one-letter code: Developmental and secondary metabolism regulator veA (555 aa).

Disordered regions lie at residues 1 to 23 (MATR…RITR), 39 to 60 (ERAR…VDPP), and 234 to 533 (RRRG…TLLS). Residues 13–23 (ETEHSVSRITR) show a composition bias toward basic and acidic residues. The 204-residue stretch at 25 to 228 (GKRITYKLNV…AEQGCRVRIR (204 aa)) folds into the Velvet domain. The Nuclear localization signal signature appears at 39-44 (ERARAC). Residues 239–258 (KRSDDYDFDEERSHRGRIPD) are compositionally biased toward basic and acidic residues. The segment covering 311–331 (AIPPAPAPAPPSSSTPTPVAP) has biased composition (pro residues). Polar residues-rich tracts occupy residues 336–372 (RSSS…TQVY) and 380–389 (HARNPSTSTE). Residues 439–479 (QTPSNAAPSLPPIASISAEYSNNLPQPPSNLAPSPNREPRG) are PEST. Composition is skewed to basic and acidic residues over residues 492–503 (RPHEDAFSHSER) and 519–533 (ADRR…TLLS).

Belongs to the velvet family. VeA subfamily. In terms of assembly, component of the heterotrimeric velvet complex composed of laeA, veA and velB; VeA acting as a bridging protein between laeA and velB.

It localises to the nucleus. It is found in the cytoplasm. Functionally, component of the velvet transcription factor complex that controls sexual/asexual developmental ratio in response to light, promoting sexual development in the darkness while stimulating asexual sporulation under illumination. The velvet complex hat acts as a global regulator for secondary metabolite gene expression. Increases spore dispersing capacity by impacting conidiophore architecture. This chain is Developmental and secondary metabolism regulator veA, found in Aspergillus niger (strain ATCC 1015 / CBS 113.46 / FGSC A1144 / LSHB Ac4 / NCTC 3858a / NRRL 328 / USDA 3528.7).